The primary structure comprises 324 residues: Phospho-N-acetylmuramoyl-pentapeptide-transferase (324 aa).

A run of 10 helical transmembrane segments spans residues 5–25 (IIVI…PLFI), 52–72 (PTMG…WVTA), 76–96 (VLSA…VLGF), 117–137 (FIGQ…SGFS), 147–167 (WSFD…VGGS), 176–196 (LDGL…VLAW), 203–223 (VAVF…FNAH), 227–247 (VFMG…VAVL), 250–270 (LELL…SVII), and 302–322 (IVVT…YIEV).

Belongs to the glycosyltransferase 4 family. MraY subfamily. Requires Mg(2+) as cofactor.

Its subcellular location is the cell membrane. It carries out the reaction UDP-N-acetyl-alpha-D-muramoyl-L-alanyl-gamma-D-glutamyl-meso-2,6-diaminopimeloyl-D-alanyl-D-alanine + di-trans,octa-cis-undecaprenyl phosphate = di-trans,octa-cis-undecaprenyl diphospho-N-acetyl-alpha-D-muramoyl-L-alanyl-D-glutamyl-meso-2,6-diaminopimeloyl-D-alanyl-D-alanine + UMP. It participates in cell wall biogenesis; peptidoglycan biosynthesis. Catalyzes the initial step of the lipid cycle reactions in the biosynthesis of the cell wall peptidoglycan: transfers peptidoglycan precursor phospho-MurNAc-pentapeptide from UDP-MurNAc-pentapeptide onto the lipid carrier undecaprenyl phosphate, yielding undecaprenyl-pyrophosphoryl-MurNAc-pentapeptide, known as lipid I. The protein is Phospho-N-acetylmuramoyl-pentapeptide-transferase of Geobacillus thermodenitrificans (strain NG80-2).